A 333-amino-acid polypeptide reads, in one-letter code: Quinolinate synthase (333 aa).

2 residues coordinate iminosuccinate: His-41 and Ser-58. Residue Cys-103 participates in [4Fe-4S] cluster binding. Iminosuccinate-binding positions include 129–131 (YIN) and Ser-146. Cys-189 is a binding site for [4Fe-4S] cluster. Residues 215 to 217 (HPE) and Thr-232 contribute to the iminosuccinate site. Cys-282 contacts [4Fe-4S] cluster.

The protein belongs to the quinolinate synthase family. Type 2 subfamily. The cofactor is [4Fe-4S] cluster.

Its subcellular location is the cytoplasm. It catalyses the reaction iminosuccinate + dihydroxyacetone phosphate = quinolinate + phosphate + 2 H2O + H(+). It participates in cofactor biosynthesis; NAD(+) biosynthesis; quinolinate from iminoaspartate: step 1/1. Catalyzes the condensation of iminoaspartate with dihydroxyacetone phosphate to form quinolinate. This is Quinolinate synthase from Prochlorococcus marinus (strain MIT 9313).